A 153-amino-acid polypeptide reads, in one-letter code: Large ribosomal subunit protein uL13 (153 aa).

It belongs to the universal ribosomal protein uL13 family. Part of the 50S ribosomal subunit.

This protein is one of the early assembly proteins of the 50S ribosomal subunit, although it is not seen to bind rRNA by itself. It is important during the early stages of 50S assembly. The chain is Large ribosomal subunit protein uL13 from Methylobacterium sp. (strain 4-46).